The chain runs to 364 residues: Probable dual-specificity RNA methyltransferase RlmN (364 aa).

Glu-107 acts as the Proton acceptor in catalysis. A Radical SAM core domain is found at 113 to 346 (HDYGNSVCVT…ATIRREQGSD (234 aa)). The cysteines at positions 120 and 351 are disulfide-linked. [4Fe-4S] cluster contacts are provided by Cys-127, Cys-131, and Cys-134. Residues 177-178 (GE), Ser-209, 232-234 (SLH), and Asn-308 each bind S-adenosyl-L-methionine. The S-methylcysteine intermediate role is filled by Cys-351.

This sequence belongs to the radical SAM superfamily. RlmN family. [4Fe-4S] cluster is required as a cofactor.

The protein resides in the cytoplasm. It carries out the reaction adenosine(2503) in 23S rRNA + 2 reduced [2Fe-2S]-[ferredoxin] + 2 S-adenosyl-L-methionine = 2-methyladenosine(2503) in 23S rRNA + 5'-deoxyadenosine + L-methionine + 2 oxidized [2Fe-2S]-[ferredoxin] + S-adenosyl-L-homocysteine. It catalyses the reaction adenosine(37) in tRNA + 2 reduced [2Fe-2S]-[ferredoxin] + 2 S-adenosyl-L-methionine = 2-methyladenosine(37) in tRNA + 5'-deoxyadenosine + L-methionine + 2 oxidized [2Fe-2S]-[ferredoxin] + S-adenosyl-L-homocysteine. In terms of biological role, specifically methylates position 2 of adenine 2503 in 23S rRNA and position 2 of adenine 37 in tRNAs. Confers resistance to some classes of antibiotics. In Staphylococcus aureus (strain Mu3 / ATCC 700698), this protein is Probable dual-specificity RNA methyltransferase RlmN.